A 241-amino-acid chain; its full sequence is Uridylate kinase (241 aa).

15–18 (KLSG) contributes to the ATP binding site. The involved in allosteric activation by GTP stretch occupies residues 23-28 (GTEGFG). Glycine 57 is a binding site for UMP. Glycine 58 and arginine 62 together coordinate ATP. Residues aspartate 77 and 138–145 (TGNPFFTT) each bind UMP. ATP is bound by residues threonine 165, phenylalanine 171, and aspartate 174.

It belongs to the UMP kinase family. Homohexamer.

The protein resides in the cytoplasm. The enzyme catalyses UMP + ATP = UDP + ADP. It participates in pyrimidine metabolism; CTP biosynthesis via de novo pathway; UDP from UMP (UMPK route): step 1/1. Its activity is regulated as follows. Allosterically activated by GTP. Inhibited by UTP. Its function is as follows. Catalyzes the reversible phosphorylation of UMP to UDP. This Escherichia coli O139:H28 (strain E24377A / ETEC) protein is Uridylate kinase.